The chain runs to 81 residues: Large ribosomal subunit protein bL31B (81 aa).

It belongs to the bacterial ribosomal protein bL31 family. Type B subfamily. In terms of assembly, part of the 50S ribosomal subunit.

The sequence is that of Large ribosomal subunit protein bL31B from Lactococcus lactis subsp. lactis (strain IL1403) (Streptococcus lactis).